The primary structure comprises 800 residues: Phenylalanine--tRNA ligase beta subunit (800 aa).

The 116-residue stretch at 39-154 (TKDIKNLVVG…ESQVPGTDAL (116 aa)) folds into the tRNA-binding domain. Residues 408–483 (AFITPIDITA…RIYGYDDIPS (76 aa)) enclose the B5 domain. Mg(2+) is bound by residues Asp461, Asp467, Glu470, and Glu471. The 93-residue stretch at 708 to 800 (PRFPGMSRDI…ALIEQGAVIR (93 aa)) folds into the FDX-ACB domain.

It belongs to the phenylalanyl-tRNA synthetase beta subunit family. Type 1 subfamily. In terms of assembly, tetramer of two alpha and two beta subunits. It depends on Mg(2+) as a cofactor.

Its subcellular location is the cytoplasm. It carries out the reaction tRNA(Phe) + L-phenylalanine + ATP = L-phenylalanyl-tRNA(Phe) + AMP + diphosphate + H(+). The chain is Phenylalanine--tRNA ligase beta subunit from Staphylococcus aureus.